Here is a 543-residue protein sequence, read N- to C-terminus: CTP synthase (543 aa).

The amidoligase domain stretch occupies residues 1–265 (MTRYVFITGG…DREVLRHFGL (265 aa)). Residue S13 participates in CTP binding. S13 provides a ligand contact to UTP. An ATP-binding site is contributed by 14-19 (SLGKGI). L-glutamine is bound at residue Y54. D71 provides a ligand contact to ATP. Mg(2+)-binding residues include D71 and E139. Residues 146 to 148 (DIE), 186 to 191 (KTKPTQ), and K222 each bind CTP. UTP-binding positions include 186–191 (KTKPTQ) and K222. Residue V240 coordinates ATP. The 252-residue stretch at 291 to 542 (TIAVVGKYTN…IEAAVKQMRL (252 aa)) folds into the Glutamine amidotransferase type-1 domain. An L-glutamine-binding site is contributed by G353. C380 functions as the Nucleophile; for glutamine hydrolysis in the catalytic mechanism. Residues 381 to 384 (FGMQ), E404, and R470 contribute to the L-glutamine site. Active-site residues include H515 and E517.

The protein belongs to the CTP synthase family. Homotetramer.

It carries out the reaction UTP + L-glutamine + ATP + H2O = CTP + L-glutamate + ADP + phosphate + 2 H(+). The catalysed reaction is L-glutamine + H2O = L-glutamate + NH4(+). It catalyses the reaction UTP + NH4(+) + ATP = CTP + ADP + phosphate + 2 H(+). It participates in pyrimidine metabolism; CTP biosynthesis via de novo pathway; CTP from UDP: step 2/2. With respect to regulation, allosterically activated by GTP, when glutamine is the substrate; GTP has no effect on the reaction when ammonia is the substrate. The allosteric effector GTP functions by stabilizing the protein conformation that binds the tetrahedral intermediate(s) formed during glutamine hydrolysis. Inhibited by the product CTP, via allosteric rather than competitive inhibition. In terms of biological role, catalyzes the ATP-dependent amination of UTP to CTP with either L-glutamine or ammonia as the source of nitrogen. Regulates intracellular CTP levels through interactions with the four ribonucleotide triphosphates. In Acidiphilium cryptum (strain JF-5), this protein is CTP synthase.